The sequence spans 413 residues: Intracellular hyaluronan-binding protein 4 (413 aa).

2 positions are modified to phosphoserine: Ser7 and Ser36. Residues 40-64 are a coiled coil; it reads DILREAERRRQQQLQRKRRDEAAAA. The disordered stretch occupies residues 42–206; that stretch reads LREAERRRQQ…RGGPGNRVFD (165 aa). Low complexity predominate over residues 62 to 82; that stretch reads AAAAGAGPRGGRSPAGASGHR. At Arg70 the chain carries Omega-N-methylarginine. Ser74 carries the post-translational modification Phosphoserine. Residues 87–97 are compositionally biased toward basic and acidic residues; that stretch reads GRRESQKERKS. Ser108 carries the post-translational modification Phosphoserine. Residues 139 to 182 are compositionally biased toward basic and acidic residues; that stretch reads MLERAERRSYREYRPYETERQADFTAEKFPDEKPGDRFDRDRPL. Residues 184-201 show a composition bias toward gly residues; it reads GRGGPRGGMRGRGRGGPG. Residues Lys213 and Lys276 each participate in a glycyl lysine isopeptide (Lys-Gly) (interchain with G-Cter in SUMO1); alternate cross-link. Glycyl lysine isopeptide (Lys-Gly) (interchain with G-Cter in SUMO2); alternate cross-links involve residues Lys213 and Lys276. Residues 227 to 320 form a disordered region; sequence VRTEDNMGGC…IRKPESTVPS (94 aa). Positions 294–315 are enriched in basic and acidic residues; that stretch reads DEWKNLQEQTRPKPEFNIRKPE. A Glycyl lysine isopeptide (Lys-Gly) (interchain with G-Cter in SUMO1); alternate cross-link involves residue Lys336. A Glycyl lysine isopeptide (Lys-Gly) (interchain with G-Cter in SUMO2); alternate cross-link involves residue Lys336. Phosphothreonine; by PKC occurs at positions 354 and 375. The segment at 360–413 is disordered; that stretch reads NFGNLPRPGRGARGGTRGGRGRIRRAENYGPRAEVVMQDVAPNPDDPEDFPALS. Over residues 404 to 413 the composition is skewed to acidic residues; it reads DDPEDFPALS.

Belongs to the SERBP1-HABP4 family. Associates with ribosomes; promoting ribosome stabilization. Interacts with EEF2/eEF2; promoting ribosome stabilization. Interacts with FMR1. Interacts with FXR1 and FXR2. Interacts with CHD3 (via C-terminus). Interacts (via C-terminus) with RACK1. Interacts with p53/TP53. Interacts (via N-terminus) with SRSF9; this interaction is direct. Interacts with SYNCRIP; this interaction is direct. Interacts with MEF2C (via N-terminus); this interaction decreases DNA-binding activity of MEF2C in myocardial cells in response to mechanical stress. Interacts with PRMT1 (via N-terminus). Interacts with SPIN1. In terms of processing, methylated. Methylation is decreased by phorbol 12-myristate 13-acetate (PMA)-activated PKC, in vitro. Post-translationally, phosphorylated by phorbol 12-myristate 13-acetate (PMA)-activated PKC isoforms at Thr-354 and Thr-375. In terms of tissue distribution, highly expressed in brain, heart, and kidney, and moderately expressed in skeletal muscle. Also expressed in a variety of tumor cell lines and in activated but not resting leukocytes.

It localises to the nucleus. The protein localises to the cytoplasm. It is found in the stress granule. Its subcellular location is the sarcoplasm. The protein resides in the nuclear body. It localises to the nucleolus. The protein localises to the nucleus speckle. It is found in the cajal body. Its subcellular location is the gem. Its function is as follows. Ribosome-binding protein that promotes ribosome hibernation, a process during which ribosomes are stabilized in an inactive state and preserved from proteasomal degradation. Acts via its association with EEF2/eEF2 factor at the A-site of the ribosome, promoting ribosome stabilization in an inactive state compatible with storage. Plays a key role in ribosome hibernation in the mature oocyte by promoting ribosome stabilization. Ribosomes, which are produced in large quantities during oogenesis, are stored and translationally repressed in the oocyte and early embryo. Also binds RNA, regulating transcription and pre-mRNA splicing. Binds (via C-terminus) to poly(U) RNA. Seems to play a role in PML-nuclear bodies formation. Negatively regulates DNA-binding activity of the transcription factor MEF2C in myocardial cells in response to mechanical stress. The polypeptide is Intracellular hyaluronan-binding protein 4 (Homo sapiens (Human)).